The chain runs to 246 residues: MSSSNACASPSPFPAVTKLHVDSVTFVPSVKSPASSNPLFLGGAGVRGLDIQGKFVIFTVIGVYLEGNAVPSLSVKWKGKTTEELTESIPFFREIVTGAFEKFIKVTMKLPLTGQQYSEKVTENCVAIWKQLGLYTDCEAKAVEKFLEIFKEETFPPGSSILFALSPTGSLTVAFSKDDSIPETGIAVIENKLLAEAVLESIIGKNGVSPGTRLSVAERLSQLMMKNKDEKEVSDHSVEEKLAKEN.

The substrate site is built by Thr59, Asn124, and Ser201.

Belongs to the chalcone isomerase family. As to expression, mostly expressed in siliques and flowers, and, to a lower extent, in leaves.

It carries out the reaction a chalcone = a flavanone.. It participates in secondary metabolite biosynthesis; flavonoid biosynthesis. Catalyzes the intramolecular cyclization of bicyclic chalcones into tricyclic (S)-flavanones. Responsible for the isomerization of 4,2',4',6'-tetrahydroxychalcone (also termed chalcone) into naringenin. This is Chalcone--flavanone isomerase 1 (CHI1) from Arabidopsis thaliana (Mouse-ear cress).